Here is a 108-residue protein sequence, read N- to C-terminus: Nucleoid-associated protein BTH_I2220 (108 aa).

It belongs to the YbaB/EbfC family. As to quaternary structure, homodimer.

The protein resides in the cytoplasm. It is found in the nucleoid. Its function is as follows. Binds to DNA and alters its conformation. May be involved in regulation of gene expression, nucleoid organization and DNA protection. The sequence is that of Nucleoid-associated protein BTH_I2220 from Burkholderia thailandensis (strain ATCC 700388 / DSM 13276 / CCUG 48851 / CIP 106301 / E264).